Here is a 598-residue protein sequence, read N- to C-terminus: Elongation factor 4 (598 aa).

The region spanning S5–T187 is the tr-type G domain. Residues D17–T22 and N134–D137 contribute to the GTP site.

The protein belongs to the TRAFAC class translation factor GTPase superfamily. Classic translation factor GTPase family. LepA subfamily.

Its subcellular location is the cell inner membrane. It catalyses the reaction GTP + H2O = GDP + phosphate + H(+). Required for accurate and efficient protein synthesis under certain stress conditions. May act as a fidelity factor of the translation reaction, by catalyzing a one-codon backward translocation of tRNAs on improperly translocated ribosomes. Back-translocation proceeds from a post-translocation (POST) complex to a pre-translocation (PRE) complex, thus giving elongation factor G a second chance to translocate the tRNAs correctly. Binds to ribosomes in a GTP-dependent manner. The chain is Elongation factor 4 from Pseudomonas syringae pv. syringae (strain B728a).